We begin with the raw amino-acid sequence, 276 residues long: Secretagogin (276 aa).

6 EF-hand domains span residues 12–47 (LDAA…LLAK), 58–93 (NVQK…EDEN), 105–140 (DNSV…LFLH), 149–184 (ELEE…QENF), 197–232 (ERKR…MMEL), and 240–276 (VDLD…KINP). 25 residues coordinate Ca(2+): D25, Y31, E36, S73, E75, R77, E82, D118, D120, S122, E129, D162, N164, D166, R168, D173, D210, S212, T214, E221, D254, N256, D258, K260, and E265.

It is found in the cytoplasm. It localises to the secreted. The protein resides in the cytoplasmic vesicle. Its subcellular location is the secretory vesicle membrane. This is Secretagogin (Scgn) from Mus musculus (Mouse).